Here is a 223-residue protein sequence, read N- to C-terminus: N-(5'-phosphoribosyl)anthranilate isomerase (223 aa).

This sequence belongs to the TrpF family.

The catalysed reaction is N-(5-phospho-beta-D-ribosyl)anthranilate = 1-(2-carboxyphenylamino)-1-deoxy-D-ribulose 5-phosphate. Its pathway is amino-acid biosynthesis; L-tryptophan biosynthesis; L-tryptophan from chorismate: step 3/5. This chain is N-(5'-phosphoribosyl)anthranilate isomerase, found in Bradyrhizobium diazoefficiens (strain JCM 10833 / BCRC 13528 / IAM 13628 / NBRC 14792 / USDA 110).